The sequence spans 130 residues: Type VII secretion system extracellular protein C (130 aa).

The protein belongs to the EsxC family. In terms of assembly, forms both homodimers and heterodimers with EsxA. Homodimerization is calcium-dependent.

It is found in the secreted. Functionally, implements its pathogenic function during infection. This Staphylococcus aureus (strain Mu50 / ATCC 700699) protein is Type VII secretion system extracellular protein C.